The primary structure comprises 429 residues: Histidinol dehydrogenase (429 aa).

Tyr130, Gln191, and Asn214 together coordinate NAD(+). Substrate contacts are provided by Ser237, Gln259, and His262. Positions 259 and 262 each coordinate Zn(2+). Residues Glu327 and His328 each act as proton acceptor in the active site. Substrate is bound by residues His328, Asp361, Glu415, and His420. Asp361 is a binding site for Zn(2+). His420 is a Zn(2+) binding site.

The protein belongs to the histidinol dehydrogenase family. The cofactor is Zn(2+).

It carries out the reaction L-histidinol + 2 NAD(+) + H2O = L-histidine + 2 NADH + 3 H(+). Its pathway is amino-acid biosynthesis; L-histidine biosynthesis; L-histidine from 5-phospho-alpha-D-ribose 1-diphosphate: step 9/9. In terms of biological role, catalyzes the sequential NAD-dependent oxidations of L-histidinol to L-histidinaldehyde and then to L-histidine. The sequence is that of Histidinol dehydrogenase from Neisseria gonorrhoeae (strain ATCC 700825 / FA 1090).